Reading from the N-terminus, the 1076-residue chain is Atos homolog protein A (1076 aa).

Residues 24–32 (ALLITEGRT) are transactivation domain 1 (TAD1). Disordered regions lie at residues 700 to 721 (ESMS…TQLN) and 739 to 765 (SDQL…QRRS). Residues 739-754 (SDQLKNEQDKQEDPTN) are compositionally biased toward basic and acidic residues. A required for macropage invasion region spans residues 878-935 (LLGNFEESVLNYRFDPLGIVDGFTAEVGASGAFCPTHLTLPVEVSFYSVSDDNAPSPY). The interval 962-970 (FNPNKTVVK) is transactivation domain 2 (TAD2).

The protein belongs to the ATOS family.

The protein localises to the nucleus. In terms of biological role, transcription regulator that syncronizes transcriptional and translational programs to promote macrophage invasion of tissues. This chain is Atos homolog protein A, found in Homo sapiens (Human).